The chain runs to 333 residues: Adenosine deaminase (333 aa).

2 residues coordinate Zn(2+): His12 and His14. His14, Asp16, and Gly170 together coordinate substrate. His197 serves as a coordination point for Zn(2+). The active-site Proton donor is the Glu200. Asp278 contributes to the Zn(2+) binding site. Position 279 (Asp279) interacts with substrate.

The protein belongs to the metallo-dependent hydrolases superfamily. Adenosine and AMP deaminases family. Adenosine deaminase subfamily. Requires Zn(2+) as cofactor.

The catalysed reaction is adenosine + H2O + H(+) = inosine + NH4(+). The enzyme catalyses 2'-deoxyadenosine + H2O + H(+) = 2'-deoxyinosine + NH4(+). Catalyzes the hydrolytic deamination of adenosine and 2-deoxyadenosine. This is Adenosine deaminase from Aliivibrio fischeri (strain MJ11) (Vibrio fischeri).